The chain runs to 292 residues: 2,3-dihydroxybenzoate decarboxylase (292 aa).

The active site involves C263.

It belongs to the metallo-dependent hydrolases superfamily. Homotetramer.

It carries out the reaction 2,3-dihydroxybenzoate + H(+) = catechol + CO2. Its pathway is aromatic compound metabolism; benzoate degradation via hydroxylation. The polypeptide is 2,3-dihydroxybenzoate decarboxylase (Aspergillus niger).